The primary structure comprises 328 residues: tRNA N6-adenosine threonylcarbamoyltransferase (328 aa).

Positions 111 and 115 each coordinate Fe cation. Substrate is bound by residues 133–137 (LVSGG), D166, G179, D183, and N270. D296 serves as a coordination point for Fe cation.

Belongs to the KAE1 / TsaD family. It depends on Fe(2+) as a cofactor.

The protein resides in the cytoplasm. It catalyses the reaction L-threonylcarbamoyladenylate + adenosine(37) in tRNA = N(6)-L-threonylcarbamoyladenosine(37) in tRNA + AMP + H(+). Functionally, required for the formation of a threonylcarbamoyl group on adenosine at position 37 (t(6)A37) in tRNAs that read codons beginning with adenine. Is involved in the transfer of the threonylcarbamoyl moiety of threonylcarbamoyl-AMP (TC-AMP) to the N6 group of A37, together with TsaE and TsaB. TsaD likely plays a direct catalytic role in this reaction. This is tRNA N6-adenosine threonylcarbamoyltransferase from Phytoplasma australiense.